Consider the following 217-residue polypeptide: tRNA (guanine-N(7)-)-methyltransferase (217 aa).

4 residues coordinate S-adenosyl-L-methionine: Glu44, Glu69, Asp96, and Asp118. The active site involves Asp118. Substrate contacts are provided by residues Lys122, Asp154, and 191 to 194; that span reads TEYE.

Belongs to the class I-like SAM-binding methyltransferase superfamily. TrmB family.

The catalysed reaction is guanosine(46) in tRNA + S-adenosyl-L-methionine = N(7)-methylguanosine(46) in tRNA + S-adenosyl-L-homocysteine. It functions in the pathway tRNA modification; N(7)-methylguanine-tRNA biosynthesis. Its function is as follows. Catalyzes the formation of N(7)-methylguanine at position 46 (m7G46) in tRNA. This is tRNA (guanine-N(7)-)-methyltransferase from Bacillus anthracis (strain CDC 684 / NRRL 3495).